Consider the following 404-residue polypeptide: Glucose-1-phosphate adenylyltransferase (404 aa).

Alpha-D-glucose 1-phosphate-binding positions include Tyr-99, Gly-164, 179 to 180, and Ser-197; that span reads EK.

This sequence belongs to the bacterial/plant glucose-1-phosphate adenylyltransferase family.

It catalyses the reaction alpha-D-glucose 1-phosphate + ATP + H(+) = ADP-alpha-D-glucose + diphosphate. It functions in the pathway capsule biogenesis; capsule polysaccharide biosynthesis. Its pathway is glycan biosynthesis; glycogen biosynthesis. Involved in the biosynthesis of ADP-glucose, a building block, required in the biosynthesis of maltose-1-phosphate (M1P) and in the elongation reactions to produce linear alpha-1,4-glucans. Catalyzes the reaction between ATP and alpha-D-glucose 1-phosphate (G1P) to produce pyrophosphate and ADP-Glc. This chain is Glucose-1-phosphate adenylyltransferase, found in Mycobacterium leprae (strain Br4923).